We begin with the raw amino-acid sequence, 172 residues long: Small ribosomal subunit protein uS4 (172 aa).

The region spanning 104–168 (RRLQTIVYRK…SPLAKMAQGG (65 aa)) is the S4 RNA-binding domain.

Belongs to the universal ribosomal protein uS4 family. As to quaternary structure, part of the 30S ribosomal subunit. Contacts protein S5. The interaction surface between S4 and S5 is involved in control of translational fidelity.

In terms of biological role, one of the primary rRNA binding proteins, it binds directly to 16S rRNA where it nucleates assembly of the body of the 30S subunit. Its function is as follows. With S5 and S12 plays an important role in translational accuracy. This chain is Small ribosomal subunit protein uS4, found in Thermofilum pendens (strain DSM 2475 / Hrk 5).